The sequence spans 23 residues: Alyteserin-1b (23 aa).

Asn23 carries the asparagine amide modification.

In terms of tissue distribution, expressed by the skin glands.

It localises to the secreted. Its subcellular location is the target cell membrane. Antibacterial peptide with amphipathic alpha-helical structure. Shows selective growth inhibitory activity against the Gram-negative bacteria E.coli (MIC=25 uM). Has a weak hemolytic activity against human erythrocytes (LC(50)=200 uM). Is not active against S.aureus (MIC=200 uM). This is Alyteserin-1b from Alytes obstetricans (Common midwife toad).